The chain runs to 204 residues: Pre-mRNA leakage protein 1 (204 aa).

In terms of domain architecture, FHA spans 104-172 (YLVGRELGHS…NGTCLNNVVI (69 aa)).

In terms of assembly, belongs to the pre-mRNA retention and splicing (RES) complex composed of at least BUD13, IST3 and PML1.

The protein localises to the cytoplasm. The protein resides in the nucleus. Functionally, required for efficient splicing and pre-mRNA nuclear retention. This Saccharomyces cerevisiae (strain ATCC 204508 / S288c) (Baker's yeast) protein is Pre-mRNA leakage protein 1 (PML1).